A 317-amino-acid polypeptide reads, in one-letter code: NAC domain-containing protein 55 (317 aa).

The region spanning 14 to 162 (LPPGFRFYPT…DWVLCRIYKK (149 aa)) is the NAC domain. A DNA-binding region spans residues 111–168 (VGIKKALVFYIGKAPKGTKTNWIMHEYRLIEPSRRNGSTKLDDWVLCRIYKKQTSAQK).

Expressed in leaves.

It is found in the nucleus. Its function is as follows. Transcription factors that bind specifically to the 5'-CATGTG-3' motif. The chain is NAC domain-containing protein 55 (NAC055) from Arabidopsis thaliana (Mouse-ear cress).